Reading from the N-terminus, the 233-residue chain is Opacity protein opA67 (233 aa).

Residue Ala-1 is a signal peptide.

This sequence belongs to the opacity porin family.

Its subcellular location is the cell outer membrane. In terms of biological role, implicated in a number of adherence functions. OPA proteins are implicated in pathogenesis and are subject to phase variation. The chain is Opacity protein opA67 from Neisseria gonorrhoeae.